We begin with the raw amino-acid sequence, 479 residues long: Signal recognition particle subunit SRP54 1 (479 aa).

Residues 1 to 295 (MVLAELGGRI…DVKPFVSRLL (295 aa)) form a G-domain region. Residues 108 to 115 (GLQGAGKT), 190 to 194 (DTSGR), and 248 to 251 (TKMD) each bind GTP. The M-domain stretch occupies residues 296–479 (GKGDWSGLVD…MMGMFGGGGK (184 aa)).

The protein belongs to the GTP-binding SRP family. SRP54 subfamily. Component of a signal recognition particle (SRP) complex that consists of a 7SL RNA molecule of 300 nucleotides and six protein subunits: SRP72, SRP68, SRP54, SRP19, SRP14 and SRP9.

It is found in the cytoplasm. Its subcellular location is the endoplasmic reticulum. The enzyme catalyses GTP + H2O = GDP + phosphate + H(+). Component of the signal recognition particle (SRP) complex, a ribonucleoprotein complex that mediates the cotranslational targeting of secretory and membrane proteins to the endoplasmic reticulum (ER). As part of the SRP complex, associates with the SRP receptor (SR) component SRPRA to target secretory proteins to the endoplasmic reticulum membrane. Binds to the signal sequence of presecretory proteins when they emerge from the ribosomes. Displays basal GTPase activity, and stimulates reciprocal GTPase activation of the SR subunit SRPRA. Forms a guanosine 5'-triphosphate (GTP)-dependent complex with the SR subunit SRPRA. SR compaction and GTPase mediated rearrangement of SR drive SRP-mediated cotranslational protein translocation into the ER. Requires the presence of SRP9/SRP14 and/or SRP19 to stably interact with RNA. The polypeptide is Signal recognition particle subunit SRP54 1 (SRP-54A) (Arabidopsis thaliana (Mouse-ear cress)).